The chain runs to 387 residues: Protein RecA (387 aa).

78 to 85 (GPESSGKT) lines the ATP pocket. The segment covering 355–369 (KSIERDTKETKETKS) has biased composition (basic and acidic residues). The segment at 355–387 (KSIERDTKETKETKSKQPVSFSTEADGDIAVGE) is disordered.

The protein belongs to the RecA family.

Its subcellular location is the cytoplasm. Functionally, can catalyze the hydrolysis of ATP in the presence of single-stranded DNA, the ATP-dependent uptake of single-stranded DNA by duplex DNA, and the ATP-dependent hybridization of homologous single-stranded DNAs. It interacts with LexA causing its activation and leading to its autocatalytic cleavage. This is Protein RecA from Leptospira biflexa serovar Patoc (strain Patoc 1 / ATCC 23582 / Paris).